A 96-amino-acid chain; its full sequence is Co-chaperonin GroES (96 aa).

It belongs to the GroES chaperonin family. Heptamer of 7 subunits arranged in a ring. Interacts with the chaperonin GroEL.

It is found in the cytoplasm. In terms of biological role, together with the chaperonin GroEL, plays an essential role in assisting protein folding. The GroEL-GroES system forms a nano-cage that allows encapsulation of the non-native substrate proteins and provides a physical environment optimized to promote and accelerate protein folding. GroES binds to the apical surface of the GroEL ring, thereby capping the opening of the GroEL channel. The polypeptide is Co-chaperonin GroES (Haemophilus influenzae (strain 86-028NP)).